The following is a 465-amino-acid chain: Cysteine--tRNA ligase 2 (465 aa).

Cysteine 30 provides a ligand contact to Zn(2+). The 'HIGH' region motif lies at 32-42 (ITVYDYCHVGH). Zn(2+) contacts are provided by cysteine 214, histidine 239, and glutamate 243. The short motif at 271–275 (KMSKS) is the 'KMSKS' region element. Residue lysine 274 coordinates ATP.

The protein belongs to the class-I aminoacyl-tRNA synthetase family. In terms of assembly, monomer. The cofactor is Zn(2+).

It localises to the cytoplasm. It carries out the reaction tRNA(Cys) + L-cysteine + ATP = L-cysteinyl-tRNA(Cys) + AMP + diphosphate. The polypeptide is Cysteine--tRNA ligase 2 (Burkholderia lata (strain ATCC 17760 / DSM 23089 / LMG 22485 / NCIMB 9086 / R18194 / 383)).